Here is a 1037-residue protein sequence, read N- to C-terminus: Guanine nucleotide-binding protein G(s) subunit alpha isoforms XLas (1037 aa).

4 disordered regions span residues 1 to 105 (MGVR…MPFE), 185 to 224 (APGGPGAAGVPGAPPEEPQALRPAKAGSRGGYSPPPEETM), 283 to 588 (SPSQ…TSGC), and 640 to 666 (PLAEKRRQMRKEALEKRAQKRAEKKRS). Positions 33-46 (APGAAAPGAGPSPA) are enriched in low complexity. The span at 343–354 (PDKRERAERPPV) shows a compositional bias: basic and acidic residues. Low complexity-rich tracts occupy residues 361-408 (MEGA…GATP) and 416-521 (APAD…PASG). A compositionally biased stretch (basic and acidic residues) spans 553-565 (GKSESSRGRRVYY). Acidic residues predominate over residues 572 to 583 (SDDDSSGDESDD). Positions 640–660 (PLAEKRRQMRKEALEKRAQKR) are enriched in basic and acidic residues. The stretch at 641–667 (LAEKRRQMRKEALEKRAQKRAEKKRSK) forms a coiled coil. The G-alpha domain maps to 682 to 1037 (CTHRLLLLGA…RMHLRQYELL (356 aa)). Residues 685 to 698 (RLLLLGAGESGKST) are G1 motif. 690-698 (GAGESGKST) lines the GTP pocket. Ser-697 is a Mg(2+) binding site. The segment at 711–734 (FNGEGGEEDPQAARSNSDGEKATK) is disordered. A coiled-coil region spans residues 730-756 (EKATKVQDIKNNLKEAIETIVAAMSNL). The tract at residues 839–847 (DLLRCRVLT) is G2 motif. GTP is bound by residues 840 to 847 (LLRCRVLT), 866 to 870 (DVGGQ), and 935 to 938 (NKQD). Residue Arg-844 is modified to ADP-ribosylarginine; by cholera toxin. Mg(2+) is bound at residue Thr-847. Residues 862-871 (FHMFDVGGQR) form a G3 motif region. The G4 motif stretch occupies residues 931-938 (ILFLNKQD). Ser-995 bears the Phosphoserine mark. The tract at residues 1007–1012 (TCAVDT) is G5 motif. Residue Ala-1009 participates in GTP binding.

The protein belongs to the G-alpha family. G(s) subfamily. As to quaternary structure, g proteins are composed of 3 units; alpha, beta and gamma. The alpha chain contains the guanine nucleotide binding site. Interacts through its N-terminal region with ALEX which is produced from the same locus in a different open reading frame. This interaction may inhibit its adenylyl cyclase-stimulating activity. Interacts with MAGED2.

It localises to the cell membrane. The protein resides in the apical cell membrane. The enzyme catalyses GTP + H2O = GDP + phosphate + H(+). Guanine nucleotide-binding proteins (G proteins) function as transducers in numerous signaling pathways controlled by G protein-coupled receptors (GPCRs). The alpha chain contains the guanine nucleotide binding site and alternates between an active, GTP-bound state and an inactive, GDP-bound state. Signaling by an activated GPCR promotes GDP release and GTP binding. The alpha subunit has a low GTPase activity that converts bound GTP to GDP, thereby terminating the signal. Both GDP release and GTP hydrolysis are modulated by numerous regulatory proteins. Signaling involves the activation of adenylyl cyclases, resulting in increased levels of the signaling molecule cAMP. GNAS functions downstream of several GPCRs, including beta-adrenergic receptors. XLas isoforms interact with the same set of receptors as Gnas isoforms. This Homo sapiens (Human) protein is Guanine nucleotide-binding protein G(s) subunit alpha isoforms XLas (GNAS).